The chain runs to 708 residues: MKLIIKNLILLLVSCLYFLSNVSCDQEVHMALLLEGQVDDLGINYEVNQGLAETEALIQRAAKVINDANSYDSTYDNIKSLLDQDNPYNLIITSSESQMSAALDIASDYEDTYFLIFGDMGDKKVPHSKVGTYYFNLVSPHFVLGFIAGGMGKSVGMVVPGPPTENYFTANAFYAGMKYYTSPAGAPNPSLSVVATSSYDDYDTATGAGRILLTKDIDICTQSQTDMTVANMFLNASKWAFGTNGFPQSNIYGNRIIQSVVHNFQVPFYEAATMVMKNTWKNGYNFFGDFNNNFFYLDYYSFLVDPLLKNQTEDLISTIKGGAKPYITNGLTYEKILEQTKLSTGITDLGYYAVPTTEVYTTGSINKTFMAVSILEMAICLIIGIIVIFFFSRNINIIYSTIPYCLTILLGASLIAVAIFLWNLRDLNTQICTSKIWMASLGYNVLIGFIIIKSSLIYFKFKEMVKSKNEKISPIPFGRIVLWFVPLLIIDCVLLIIYSTSGNPGKIDSLGLDGIGRYEYTQNCVNNLTGDIILYIILVFHGLQLLYGCVIAWKTRVIDLEEFIEAHDFATAIYLITFCSFIIVILMVGVTSTSNRNTIISACAIFSSFSCVLIIFGAKFWKIYKPVEDDGLPQIKLKPQKSYSGSGGSGNSSGSKSKKTSAHSSTSGVKSGTSAPTQTSQSAMASINIQNFVNPIEASSRAAAQNDN.

The N-terminal stretch at 1–24 is a signal peptide; sequence MKLIIKNLILLLVSCLYFLSNVSC. N-linked (GlcNAc...) asparagine glycans are attached at residues Asn-21, Asn-235, Asn-310, and Asn-366. The Extracellular portion of the chain corresponds to 25–370; it reads DQEVHMALLL…TTGSINKTFM (346 aa). A helical membrane pass occupies residues 371 to 391; that stretch reads AVSILEMAICLIIGIIVIFFF. The Cytoplasmic portion of the chain corresponds to 392–401; that stretch reads SRNINIIYST. The helical transmembrane segment at 402–422 threads the bilayer; it reads IPYCLTILLGASLIAVAIFLW. Residues 423 to 435 are Extracellular-facing; that stretch reads NLRDLNTQICTSK. The chain crosses the membrane as a helical span at residues 436-456; sequence IWMASLGYNVLIGFIIIKSSL. Residues 457 to 479 lie on the Cytoplasmic side of the membrane; sequence IYFKFKEMVKSKNEKISPIPFGR. Residues 480–500 traverse the membrane as a helical segment; sequence IVLWFVPLLIIDCVLLIIYST. Residues 501–531 lie on the Extracellular side of the membrane; that stretch reads SGNPGKIDSLGLDGIGRYEYTQNCVNNLTGD. An N-linked (GlcNAc...) asparagine glycan is attached at Asn-527. Residues 532-552 form a helical membrane-spanning segment; sequence IILYIILVFHGLQLLYGCVIA. Over 553–568 the chain is Cytoplasmic; sequence WKTRVIDLEEFIEAHD. A helical membrane pass occupies residues 569 to 589; it reads FATAIYLITFCSFIIVILMVG. Residues 590 to 597 lie on the Extracellular side of the membrane; the sequence is VTSTSNRN. A helical membrane pass occupies residues 598 to 618; the sequence is TIISACAIFSSFSCVLIIFGA. Residues 619–708 lie on the Cytoplasmic side of the membrane; sequence KFWKIYKPVE…SSRAAAQNDN (90 aa). Positions 638 to 681 are disordered; sequence KPQKSYSGSGGSGNSSGSKSKKTSAHSSTSGVKSGTSAPTQTSQ. Residues 669–681 are compositionally biased toward polar residues; the sequence is VKSGTSAPTQTSQ.

The protein in the N-terminal section; belongs to the BMP lipoprotein family. In the C-terminal section; belongs to the G-protein coupled receptor 3 family. GABA-B receptor subfamily.

Its subcellular location is the membrane. The polypeptide is Metabotropic glutamate receptor-like protein L (far1) (Dictyostelium discoideum (Social amoeba)).